Reading from the N-terminus, the 325-residue chain is D-alanine--D-alanine ligase (325 aa).

The ATP-grasp domain occupies 107–311; the sequence is KRLLLSESLP…YEALCVEVLK (205 aa). 137-192 is an ATP binding site; it reads VDTLGLPLIVKPAREGSSLGLSKVTERAAMAAAVALAEKMDADILCEQFISGDEVT. Positions 264, 278, and 280 each coordinate Mg(2+).

Belongs to the D-alanine--D-alanine ligase family. Mg(2+) serves as cofactor. It depends on Mn(2+) as a cofactor.

The protein resides in the cytoplasm. The enzyme catalyses 2 D-alanine + ATP = D-alanyl-D-alanine + ADP + phosphate + H(+). It participates in cell wall biogenesis; peptidoglycan biosynthesis. Its function is as follows. Cell wall formation. The protein is D-alanine--D-alanine ligase of Polaromonas naphthalenivorans (strain CJ2).